A 257-amino-acid chain; its full sequence is Chymotrypsin-like protease VLCTLP (257 aa).

Positions Met-1–Ala-18 are cleaved as a signal peptide. Positions Gln-19–Leu-24 are excised as a propeptide. A Peptidase S1 domain is found at Val-25–Ala-248. Cystine bridges form between Cys-31/Cys-162, Cys-49/Cys-65, Cys-97/Cys-255, Cys-141/Cys-209, Cys-173/Cys-188, and Cys-199/Cys-224. An N-linked (GlcNAc...) asparagine glycan is attached at Asn-44. Catalysis depends on His-64, which acts as the Charge relay system. N-linked (GlcNAc...) asparagine glycosylation is present at Asn-100. The Charge relay system role is filled by Asp-109. Residues Asn-116 and Asn-153 are each glycosylated (N-linked (GlcNAc...) asparagine). Catalysis depends on Ser-203, which acts as the Charge relay system. Residue Asn-250 is glycosylated (N-linked (GlcNAc...) asparagine).

Belongs to the peptidase S1 family. Snake venom subfamily. Monomer. In terms of processing, partial deglycosylation has not effect on enzyme activity. In terms of tissue distribution, expressed by the venom gland.

It localises to the secreted. Its activity is regulated as follows. Inhibited by PMSF. Functionally, snake venom serine protease with tyrosine-specific chymotrypsin-like activity. Hydrolyzes the N-acetyl-L-tyrosine ethyl ester (ATEE). Has weak fibrinogenolytic activity. Weakly hydrolyzes azocasein, Aalpha-chain (FGA) and more slowly Bbeta-chain (FGB) of fibrinogen. Optimal substrates are angiotensins I and II (AGT). In Macrovipera lebetinus (Levantine viper), this protein is Chymotrypsin-like protease VLCTLP.